Reading from the N-terminus, the 169-residue chain is Probable prefoldin subunit 3 (169 aa).

It belongs to the prefoldin subunit alpha family. Heterohexamer of two PFD-alpha type and four PFD-beta type subunits.

Functionally, binds specifically to cytosolic chaperonin (c-CPN) and transfers target proteins to it. Binds to nascent polypeptide chain and promotes folding in an environment in which there are many competing pathways for nonnative proteins. This is Probable prefoldin subunit 3 from Schizosaccharomyces pombe (strain 972 / ATCC 24843) (Fission yeast).